The primary structure comprises 687 residues: Complement C1s subcomponent (687 aa).

The N-terminal stretch at 1-15 (MWCIVLLSLLAWVDA) is a signal peptide. The 115-residue stretch at 16–130 (EPTMYGEILS…TGFAAYYVAV (115 aa)) folds into the CUB 1 domain. The Ca(2+) site is built by glutamate 60, aspartate 68, aspartate 113, aspartate 131, valine 132, and glutamate 134. A disulfide bridge connects residues cysteine 65 and cysteine 83. The EGF-like; calcium-binding domain maps to 131-172 (DVNECTDFADSPCSHFCNNYIGGYFCSCPPEYFLHEDKKNCG). Cystine bridges form between cysteine 135–cysteine 147, cysteine 143–cysteine 156, and cysteine 158–cysteine 171. Ca(2+) is bound by residues asparagine 149, tyrosine 150, and glycine 153. (3R)-3-hydroxyasparagine is present on asparagine 149. Asparagine 174 carries an N-linked (GlcNAc...) asparagine glycan. Intrachain disulfides connect cysteine 175/cysteine 202, cysteine 234/cysteine 251, cysteine 294/cysteine 341, cysteine 321/cysteine 354, cysteine 359/cysteine 403, cysteine 386/cysteine 421, cysteine 425/cysteine 548, cysteine 594/cysteine 617, and cysteine 626/cysteine 658. The region spanning 175–290 (CSGDVFTTLI…KGWKFRYHGD (116 aa)) is the CUB 2 domain. 2 Sushi domains span residues 292-356 (IPCP…RCQP) and 357-423 (VDCG…KCVP). An N-linked (GlcNAc...) asparagine glycan is attached at asparagine 406. The 242-residue stretch at 438-679 (IFGGIITKIE…YIDWIRETMQ (242 aa)) folds into the Peptidase S1 domain. Catalysis depends on charge relay system residues histidine 475 and aspartate 528. Serine 630 functions as the Charge relay system in the catalytic mechanism.

Belongs to the peptidase S1 family. In terms of assembly, C1 is a calcium-dependent trimolecular complex of C1q, C1r and C1s in the molar ration of 1:2:2. Activated C1s is an disulfide-linked heterodimer of a heavy chain and a light chain. The iron and 2-oxoglutarate dependent 3-hydroxylation of aspartate and asparagine is (R) stereospecific within EGF domains.

The catalysed reaction is Cleavage of Arg-|-Ala bond in complement component C4 to form C4a and C4b, and Lys(or Arg)-|-Lys bond in complement component C2 to form C2a and C2b: the 'classical' pathway C3 convertase.. With respect to regulation, inhibited by SERPING1. C1s B chain is a serine protease that combines with C1q and C1r to form C1, the first component of the classical pathway of the complement system. C1r activates C1s so that it can, in turn, activate C2 and C4. Also cleaves IGFBP5 and thereby inhibits the trophic effects of IGF1. The protein is Complement C1s subcomponent of Sus scrofa (Pig).